A 1470-amino-acid polypeptide reads, in one-letter code: Membrane-associated guanylate kinase, WW and PDZ domain-containing protein 3 (1470 aa).

The 91-residue stretch at 18–108 (CAVSWAGPPG…PIRLKTVKPG (91 aa)) folds into the PDZ 1 domain. Positions 18-108 (CAVSWAGPPG…PIRLKTVKPG (91 aa)) are interaction with ADRB1 and TGFA. One can recognise a Guanylate kinase-like domain in the interval 116–290 (RHYLSLQFQK…RSMDFRNYMM (175 aa)). An ATP-binding site is contributed by 123 to 130 (FQKGSIDH). Positions 184-266 (TYDGNFYGTP…ETREMHSESS (83 aa)) are disordered. Pro residues predominate over residues 193–204 (PKPPAEPSPFQP). Ser236 carries the phosphoserine modification. The segment covering 238–247 (LPEEEEDEDK) has biased composition (acidic residues). 2 WW domains span residues 296–329 (EPLP…DPRL) and 342–375 (GELP…NPVE). The 83-residue stretch at 413–495 (RASLKKSTMG…NQYVNLTLCR (83 aa)) folds into the PDZ 2 domain. The interval 413-495 (RASLKKSTMG…NQYVNLTLCR (83 aa)) is interaction with PTEN. A disordered region spans residues 550–575 (LLSSDRLNGPSDSNEQRASLASSGSS). Residues 559-575 (PSDSNEQRASLASSGSS) are compositionally biased toward polar residues. The PDZ 3 domain occupies 581-657 (TIPLVKGPKG…GADVPLLILR (77 aa)). Ser598 carries the post-translational modification Phosphoserine. Residues 665–700 (KTAKMKTDTKETSGSLETINEPTPQPMPFPPSIIRS) form a disordered region. Over residues 676–686 (TSGSLETINEP) the composition is skewed to polar residues. A Phosphoserine modification is found at Ser702. The PDZ 4 domain maps to 729–811 (DVFLRKQESG…NGHVLLTVRR (83 aa)). The interval 729–811 (DVFLRKQESG…NGHVLLTVRR (83 aa)) is interaction with ADGRB1. Residues 818 to 847 (KQPEDESPQAFSQSGSPRLNRTELPTRSAP) are disordered. Residues 826-847 (QAFSQSGSPRLNRTELPTRSAP) show a composition bias toward polar residues. Phosphoserine is present on residues Ser833 and Ser916. The PDZ 5 domain occupies 852–939 (DVILQRKENE…TVTLTVVAEE (88 aa)). The interval 852-939 (DVILQRKENE…TVTLTVVAEE (88 aa)) is interaction with LPAR2 and GRIN2B. Residues 939 to 976 (EEHHGPPSGTNSARQSPALQHRPMGQAQATHIPGDRTA) form a disordered region. The segment covering 946–956 (SGTNSARQSPA) has biased composition (polar residues). The 83-residue stretch at 1022–1104 (PVELERGPRG…KVLLLLRPGT (83 aa)) folds into the PDZ 6 domain. 2 disordered regions span residues 1124 to 1146 (IYDE…ESHV) and 1167 to 1470 (DTVQ…DKQL). The segment covering 1175–1191 (TLNGSQPEMKYQSIQKN) has biased composition (polar residues). Basic and acidic residues-rich tracts occupy residues 1193 to 1209 (SKKD…KNLL) and 1230 to 1263 (RHSE…KGEN). The segment covering 1285–1304 (SSSPRKQQKIGGNSLSNTEG) has biased composition (polar residues). Ser1321 carries the phosphoserine modification. Basic and acidic residues-rich tracts occupy residues 1326-1340 (PEGK…KDLK), 1350-1361 (RSPEKRSSKVDE), 1377-1397 (VSEK…DKTG), and 1422-1431 (EVTDRGKERA).

This sequence belongs to the MAGUK family. As to quaternary structure, interacts with ADRB1, ADGRB1, LPAR2/EDG4, FZD4, FZD7, GRIN2B, TGFA and VANGL2. Interacts with PTEN. Interacts with ADRB1, PTPRB and unidentified tyrosine phosphorylated proteins. Interacts with DLL1. Interacts with PRRG4 (via cytoplasmic domain).

The protein localises to the cell membrane. It is found in the cell junction. The protein resides in the tight junction. Its subcellular location is the nucleus. Functionally, acts as a scaffolding protein at cell-cell junctions, thereby regulating various cellular and signaling processes. Cooperates with PTEN to modulate the kinase activity of AKT1. Its interaction with PTPRB and tyrosine phosphorylated proteins suggests that it may link receptor tyrosine phosphatase with its substrates at the plasma membrane. In polarized epithelial cells, involved in efficient trafficking of TGFA to the cell surface. Regulates the ability of LPAR2 to activate ERK and RhoA pathways. Regulates the JNK signaling cascade via its interaction with FZD4 and VANGL2. This is Membrane-associated guanylate kinase, WW and PDZ domain-containing protein 3 (Magi3) from Rattus norvegicus (Rat).